The primary structure comprises 136 residues: Regulator of nucleoside diphosphate kinase (136 aa).

The protein belongs to the Rnk family. Interacts with the RNA polymerase.

May act as an anti-Gre factor. This chain is Regulator of nucleoside diphosphate kinase, found in Escherichia coli O6:H1 (strain CFT073 / ATCC 700928 / UPEC).